The primary structure comprises 473 residues: Argininosuccinate lyase (473 aa).

Belongs to the lyase 1 family. Argininosuccinate lyase subfamily.

The protein resides in the cytoplasm. The enzyme catalyses 2-(N(omega)-L-arginino)succinate = fumarate + L-arginine. The protein operates within amino-acid biosynthesis; L-arginine biosynthesis; L-arginine from L-ornithine and carbamoyl phosphate: step 3/3. The polypeptide is Argininosuccinate lyase (Chelativorans sp. (strain BNC1)).